We begin with the raw amino-acid sequence, 278 residues long: 2-dehydro-3-deoxyphosphooctonate aldolase (278 aa).

The protein belongs to the KdsA family.

It is found in the cytoplasm. It catalyses the reaction D-arabinose 5-phosphate + phosphoenolpyruvate + H2O = 3-deoxy-alpha-D-manno-2-octulosonate-8-phosphate + phosphate. It functions in the pathway carbohydrate biosynthesis; 3-deoxy-D-manno-octulosonate biosynthesis; 3-deoxy-D-manno-octulosonate from D-ribulose 5-phosphate: step 2/3. It participates in bacterial outer membrane biogenesis; lipopolysaccharide biosynthesis. This is 2-dehydro-3-deoxyphosphooctonate aldolase from Dechloromonas aromatica (strain RCB).